We begin with the raw amino-acid sequence, 366 residues long: Peptide chain release factor 1 (366 aa).

At Q239 the chain carries N5-methylglutamine.

It belongs to the prokaryotic/mitochondrial release factor family. Methylated by PrmC. Methylation increases the termination efficiency of RF1.

It is found in the cytoplasm. Functionally, peptide chain release factor 1 directs the termination of translation in response to the peptide chain termination codons UAG and UAA. The polypeptide is Peptide chain release factor 1 (Baumannia cicadellinicola subsp. Homalodisca coagulata).